Reading from the N-terminus, the 424-residue chain is Kynureninase (424 aa).

Residues leucine 105, serine 106, phenylalanine 133–aspartate 136, aspartate 218, histidine 221, and tyrosine 243 each bind pyridoxal 5'-phosphate. Lysine 244 is subject to N6-(pyridoxal phosphate)lysine. The pyridoxal 5'-phosphate site is built by tryptophan 274 and asparagine 302.

Belongs to the kynureninase family. In terms of assembly, homodimer. The cofactor is pyridoxal 5'-phosphate.

The catalysed reaction is L-kynurenine + H2O = anthranilate + L-alanine + H(+). It catalyses the reaction 3-hydroxy-L-kynurenine + H2O = 3-hydroxyanthranilate + L-alanine + H(+). The protein operates within amino-acid degradation; L-kynurenine degradation; L-alanine and anthranilate from L-kynurenine: step 1/1. It participates in cofactor biosynthesis; NAD(+) biosynthesis; quinolinate from L-kynurenine: step 2/3. Catalyzes the cleavage of L-kynurenine (L-Kyn) and L-3-hydroxykynurenine (L-3OHKyn) into anthranilic acid (AA) and 3-hydroxyanthranilic acid (3-OHAA), respectively. In Stenotrophomonas maltophilia (strain K279a), this protein is Kynureninase.